A 420-amino-acid polypeptide reads, in one-letter code: Phosphoribosylamine--glycine ligase (420 aa).

An ATP-grasp domain is found at 108-314; that stretch reads KEIMVKYGVS…FAQNITDILD (207 aa). Residue 134-195 coordinates ATP; the sequence is IEKHGAPIVV…EEFLEGEEFS (62 aa). The Mg(2+) site is built by Glu284 and Asn286.

The protein belongs to the GARS family. The cofactor is Mg(2+). Requires Mn(2+) as cofactor.

The enzyme catalyses 5-phospho-beta-D-ribosylamine + glycine + ATP = N(1)-(5-phospho-beta-D-ribosyl)glycinamide + ADP + phosphate + H(+). It participates in purine metabolism; IMP biosynthesis via de novo pathway; N(1)-(5-phospho-D-ribosyl)glycinamide from 5-phospho-alpha-D-ribose 1-diphosphate: step 2/2. The protein is Phosphoribosylamine--glycine ligase of Streptococcus pneumoniae (strain ATCC BAA-255 / R6).